We begin with the raw amino-acid sequence, 625 residues long: MASPDKKSSLAALTLAAVGIVYGDIGTSPLYTMKEVFSKEHGLALTPENLLGVVSLIVWGLIIIVSLKYVTLVLRANNRGEGGIMALMALALSSVTRNSRWYFPLLVMGLFGATLFYGDSVITPAISVLSAIEGLSVATETFDPYVVPLTVAVLVGLYSVQARGTAGIGKWFGPIMVVWFATLAVMGVVNIIDAPEILYALNPWHALHFLDGNRFLAFIALGAVVLAFTGAEALYADMGHFGAKPIRMAWFLVAFPALALNYLGQGALLLMHPDAVTNPFYQQLGAWSIYPLVALSTMAAIIASQATISGTFSMTKQAIALGFLPRMKIEFTSASQIGQIYIPAVNWLQMAVVVMAVVGFGSSSDLAAAYGIAVTATMLVTTILTFFVIRYRWKYNLLLCLASTGFFLVIDLSLFSANMLKLFHGGWFPLLLGTILFTLMLTWKRGRELVFENLQKHAIPLEDFLASLFISPPTRVPGTAIFLRGESDGVPHAMLHNLSHNKVLHERVVFLTVRMMEVPYVPTTDQVRIHLLGDDCYQMDVTYGFKNVPDIPAALELAKDQGLEFEMMETSFFIARQTVVANPVRGMALWREHIFVAMSRHARGAADYYQIPSNRVIELGTKVEI.

12 helical membrane-spanning segments follow: residues 10–30 (LAAL…TSPL), 50–70 (LLGV…LKYV), 102–122 (YFPL…DSVI), 142–162 (FDPY…SVQA), 172–192 (FGPI…VNII), 215–235 (FLAF…EALY), 250–270 (WFLV…ALLL), 284–304 (LGAW…IIAS), 340–360 (IYIP…VVGF), 369–389 (AYGI…FFVI), 397–417 (LLLC…LFSA), and 422–442 (LFHG…LMLT).

This sequence belongs to the HAK/KUP transporter (TC 2.A.72) family.

It localises to the cell inner membrane. It carries out the reaction K(+)(in) + H(+)(in) = K(+)(out) + H(+)(out). In terms of biological role, transport of potassium into the cell. Likely operates as a K(+):H(+) symporter. This Janthinobacterium sp. (strain Marseille) (Minibacterium massiliensis) protein is Probable potassium transport system protein Kup.